Here is a 215-residue protein sequence, read N- to C-terminus: Adenylate kinase (215 aa).

10–15 is a binding site for ATP; the sequence is GAGKGT. The interval 30 to 59 is NMP; it reads STGDMFRAAMKNNTELGRKAKSFMDNGDLV. AMP-binding positions include threonine 31, arginine 36, 57 to 59, 85 to 88, and glutamine 92; these read DLV and GFPR. The LID stretch occupies residues 126 to 163; the sequence is GRWICRTCGKTYHEIYNPPKVAGKCDLDGGELYQRDDD. Arginine 127 is a binding site for ATP. Zn(2+) contacts are provided by cysteine 130 and cysteine 133. An ATP-binding site is contributed by 136-137; the sequence is TY. Cysteine 150 and aspartate 153 together coordinate Zn(2+). AMP is bound by residues arginine 160 and arginine 171. Glutamine 199 is a binding site for ATP.

It belongs to the adenylate kinase family. As to quaternary structure, monomer.

The protein localises to the cytoplasm. The enzyme catalyses AMP + ATP = 2 ADP. It functions in the pathway purine metabolism; AMP biosynthesis via salvage pathway; AMP from ADP: step 1/1. Catalyzes the reversible transfer of the terminal phosphate group between ATP and AMP. Plays an important role in cellular energy homeostasis and in adenine nucleotide metabolism. This chain is Adenylate kinase, found in Listeria monocytogenes serotype 4a (strain HCC23).